Consider the following 567-residue polypeptide: Probable E3 ubiquitin-protein ligase ARI8 (567 aa).

Residues 1–27 are disordered; the sequence is MEADDDFYSGTENYSDYADSDEDDADG. A compositionally biased stretch (acidic residues) spans 18–27; the sequence is ADSDEDDADG. Positions 124–337 are TRIAD supradomain; that stretch reads GELDCGICFE…GGFYACNRYE (214 aa). C128, C131, C145, H147, C150, C153, C173, C178, C217, C222, C239, C241, C246, C249, H254, C259, C286, and C289 together coordinate Zn(2+). The RING-type 1 zinc finger occupies 128-178; the sequence is CGICFETFLSDKLHAAACGHPFCDSCWEGYITTAINDGPGCLTLRCPDPSC. The IBR-type zinc finger occupies 197 to 259; it reads QKYTSYFVRS…AEEAHRPVDC (63 aa). The segment at 286-316 adopts an RING-type 2; atypical zinc-finger fold; that stretch reads CPKCKRPIEKNQGCMHITCTPPCKFEFCWLC. C299 is a catalytic residue. C304, C308, C313, C316, H323, and C333 together coordinate Zn(2+). The tract at residues 514-543 is disordered; that stretch reads DAYDRTSSSKSLGGKTKGSSSKASSSDSSH. Residues 521–542 are compositionally biased toward low complexity; it reads SSKSLGGKTKGSSSKASSSDSS. The RanBP2-type zinc-finger motif lies at 540 to 567; it reads DSSHWPCEYCTYVNPRSTTICQMCEHGR.

This sequence belongs to the RBR family. Ariadne subfamily. It depends on Zn(2+) as a cofactor. Ubiquitous.

It catalyses the reaction [E2 ubiquitin-conjugating enzyme]-S-ubiquitinyl-L-cysteine + [acceptor protein]-L-lysine = [E2 ubiquitin-conjugating enzyme]-L-cysteine + [acceptor protein]-N(6)-ubiquitinyl-L-lysine.. It functions in the pathway protein modification; protein ubiquitination. In terms of biological role, might act as an E3 ubiquitin-protein ligase, or as part of E3 complex, which accepts ubiquitin from specific E2 ubiquitin-conjugating enzymes and then transfers it to substrates. The sequence is that of Probable E3 ubiquitin-protein ligase ARI8 (ARI8) from Arabidopsis thaliana (Mouse-ear cress).